Here is an 835-residue protein sequence, read N- to C-terminus: Disease resistance protein RPP13 (835 aa).

Positions 25–41 form a coiled coil; it reads MAVKEDLEELKTELTCI. The 310-residue stretch at 144–453 folds into the NB-ARC domain; it reads SSLRVRQLRR…AEGFIQGDEE (310 aa). 192–199 contacts ATP; it reads GMGGLGKT.

This sequence belongs to the disease resistance NB-LRR family. RPP13 subfamily.

Its function is as follows. Disease resistance protein. Resistance proteins guard the plant against pathogens that contain an appropriate avirulence protein via an indirect interaction with this avirulence protein. That triggers a defense system including the hypersensitive response, which restricts the pathogen growth. In contrast to other resistance proteins, it works independently of ESD1 and NSD1 proteins and does not require the accumulation of salicylic acid, suggesting the existence of an independent signaling pathway. The specificity to avirulence proteins differs in the different cultivars. This chain is Disease resistance protein RPP13 (RPP13), found in Arabidopsis thaliana (Mouse-ear cress).